The primary structure comprises 152 residues: MMKKIDVKIVDPRVGQQFPLPTYATPGSAGLDLRACLDQAIELKAGETTLIPTGLAIHIADTGLAAVILPRSGLGHKHGVVLGNLVGLIDSDYQGQLMVSVWNRGQQTFTVEPGERIAQMVFVPVVQAEFNLVEDFVSSERGEGGFGHSGRS.

Residues 71-73 (RSG), Asn-84, 88-90 (LID), and Met-98 contribute to the substrate site.

This sequence belongs to the dUTPase family. Requires Mg(2+) as cofactor.

The enzyme catalyses dUTP + H2O = dUMP + diphosphate + H(+). It participates in pyrimidine metabolism; dUMP biosynthesis; dUMP from dCTP (dUTP route): step 2/2. Functionally, this enzyme is involved in nucleotide metabolism: it produces dUMP, the immediate precursor of thymidine nucleotides and it decreases the intracellular concentration of dUTP so that uracil cannot be incorporated into DNA. In Pectobacterium carotovorum subsp. carotovorum (strain PC1), this protein is Deoxyuridine 5'-triphosphate nucleotidohydrolase.